We begin with the raw amino-acid sequence, 358 residues long: MGHFSSMFNGIARSFSIKKAKNINSSKSYAKEATDEMAREAKKKELILRSSGCINADGSNNLASVFSRRGEKGVNQDCAIVWEGYGCQEDMIFCGIFDGHGPWGHFVSKQVRNSMPISLLCNWKETLSQTTIAEPDKELQRFAIWKYSFLKTCEAVDLELEHHRKIDSFNSGTTALTIVRQGDVIYIANVGDSRAVLATVSDEGSLVAVQLTVDFKPNLPQEEERIIGCNGRVFCLQDEPGVHRVWQPVDESPGLAMSRAFGDYCIKDYGLVSVPEVTQRHISIRDQFIILATDGVWDVISNQEAIDIVSSTAERAKAAKRLVQQAVRAWNRKRRGIAMDDISAVCLFFHSSSSSPSL.

A PPM-type phosphatase domain is found at 62–349 (LASVFSRRGE…DDISAVCLFF (288 aa)). Residues D98, G99, D294, and D340 each contribute to the Mn(2+) site.

This sequence belongs to the PP2C family. Requires Mg(2+) as cofactor. Mn(2+) is required as a cofactor.

The enzyme catalyses O-phospho-L-seryl-[protein] + H2O = L-seryl-[protein] + phosphate. It carries out the reaction O-phospho-L-threonyl-[protein] + H2O = L-threonyl-[protein] + phosphate. The polypeptide is Probable protein phosphatase 2C 34 (Arabidopsis thaliana (Mouse-ear cress)).